We begin with the raw amino-acid sequence, 507 residues long: Aldehyde dehydrogenase 1, mitochondrial (507 aa).

A mitochondrion-targeting transit peptide spans 1 to 21; sequence MLATRNLVPIIRASIKWRIKL. 266 to 271 contributes to the NAD(+) binding site; sequence GSTLVG. Residues Glu-289 and Cys-323 contribute to the active site.

The protein belongs to the aldehyde dehydrogenase family. Homotetramer.

It is found in the mitochondrion matrix. It catalyses the reaction an aldehyde + NAD(+) + H2O = a carboxylate + NADH + 2 H(+). The protein operates within alcohol metabolism; ethanol degradation; acetate from ethanol: step 2/2. This chain is Aldehyde dehydrogenase 1, mitochondrial (ALD1), found in Saccharomyces cerevisiae (Baker's yeast).